The primary structure comprises 971 residues: Exportin-2 (971 aa).

Residues 29-102 (AEKFLESVEG…KANIVNLMLT (74 aa)) enclose the Importin N-terminal domain.

This sequence belongs to the XPO2/CSE1 family. As to quaternary structure, interacts with cftr. Detected in larval gut, liver, exocrine pancreas and part of the brain and retina at 96 hpf.

The protein localises to the cytoplasm. It is found in the nucleus. It localises to the apical cell membrane. Its subcellular location is the basal cell membrane. The protein resides in the lateral cell membrane. Functionally, export receptor for importin alpha. Mediates importin-alpha re-export from the nucleus to the cytoplasm after import substrates have been released into the nucleoplasm. Negatively regulates fluid secretion and plays a role in fluid homeostasis by down-regulating cftr activity. The chain is Exportin-2 (cse1l) from Danio rerio (Zebrafish).